A 325-amino-acid chain; its full sequence is Aldo-keto reductase family 1 member A1 (325 aa).

Ala-2 carries the N-acetylalanine modification. The residue at position 4 (Ser-4) is a Phosphoserine. Residues Gly-11 to Gly-20, Thr-21, and Trp-22 contribute to the NADP(+) site. Ser-38 carries the phosphoserine modification. Asp-45 is an NADP(+) binding site. The active-site Proton donor is the Tyr-50. At Lys-127 the chain carries N6-acetyllysine; alternate. Residue Lys-127 is modified to N6-succinyllysine; alternate. Lys-145 carries the N6-succinyllysine modification. Positions 162, 163, 211, 213, 215, 216, 263, 264, 265, 266, 269, 272, and 273 each coordinate NADP(+). Ser-211 is modified (phosphoserine).

It belongs to the aldo/keto reductase family. Monomer. In terms of tissue distribution, widely expressed. Highly expressed in kidney, salivary gland and liver. Detected in trachea, stomach, brain, lung, prostate, placenta, mammary gland, small intestine and lung.

The protein localises to the cytoplasm. It localises to the cytosol. The protein resides in the apical cell membrane. The catalysed reaction is a primary alcohol + NADP(+) = an aldehyde + NADPH + H(+). The enzyme catalyses allyl alcohol + NADP(+) = acrolein + NADPH + H(+). It carries out the reaction glycerol + NADP(+) = D-glyceraldehyde + NADPH + H(+). It catalyses the reaction glycerol + NADP(+) = L-glyceraldehyde + NADPH + H(+). The catalysed reaction is hydroxyacetone + NADP(+) = methylglyoxal + NADPH + H(+). The enzyme catalyses a 4-hydroxynonen-1-ol + NADP(+) = a 4-hydroxynonenal + NADPH + H(+). It carries out the reaction 3-deoxyfructose + NADP(+) = 3-deoxyglucosone + NADPH + H(+). It catalyses the reaction L-gulonate + NADP(+) = aldehydo-D-glucuronate + NADPH + H(+). The catalysed reaction is L-gulono-1,4-lactone + NADP(+) = D-glucurono-3,6-lactone + NADPH + H(+). The enzyme catalyses pyridine 3-methanol + NADP(+) = pyridine-3-carbaldehyde + NADPH + H(+). It carries out the reaction S-nitroso-CoA + NADPH + H(+) = sulfinamide-CoA + NADP(+). It catalyses the reaction S-nitrosoglutathione + NADPH + H(+) = S-(hydroxysulfenamide)glutathione + NADP(+). Functionally, catalyzes the NADPH-dependent reduction of a wide variety of carbonyl-containing compounds to their corresponding alcohols. Displays enzymatic activity towards endogenous metabolites such as aromatic and aliphatic aldehydes, ketones, monosaccharides and bile acids, with a preference for negatively charged substrates, such as glucuronate and succinic semialdehyde. Functions as a detoxifiying enzyme by reducing a range of toxic aldehydes. Reduces methylglyoxal and 3-deoxyglucosone, which are present at elevated levels under hyperglycemic conditions and are cytotoxic. Involved also in the detoxification of lipid-derived aldehydes like acrolein. Plays a role in the activation of procarcinogens, such as polycyclic aromatic hydrocarbon trans-dihydrodiols, and in the metabolism of various xenobiotics and drugs, including the anthracyclines doxorubicin (DOX) and daunorubicin (DAUN). Also acts as an inhibitor of protein S-nitrosylation by mediating degradation of S-nitroso-coenzyme A (S-nitroso-CoA), a cofactor required to S-nitrosylate proteins. S-nitroso-CoA reductase activity is involved in reprogramming intermediary metabolism in renal proximal tubules, notably by inhibiting protein S-nitrosylation of isoform 2 of PKM (PKM2). Also acts as a S-nitroso-glutathione reductase by catalyzing the NADPH-dependent reduction of S-nitrosoglutathione. Displays no reductase activity towards retinoids. The polypeptide is Aldo-keto reductase family 1 member A1 (AKR1A1) (Homo sapiens (Human)).